The chain runs to 122 residues: Large ribosomal subunit protein uL14 (122 aa).

It belongs to the universal ribosomal protein uL14 family. In terms of assembly, part of the 50S ribosomal subunit. Forms a cluster with proteins L3 and L19. In the 70S ribosome, L14 and L19 interact and together make contacts with the 16S rRNA in bridges B5 and B8.

Its function is as follows. Binds to 23S rRNA. Forms part of two intersubunit bridges in the 70S ribosome. This chain is Large ribosomal subunit protein uL14, found in Novosphingobium aromaticivorans (strain ATCC 700278 / DSM 12444 / CCUG 56034 / CIP 105152 / NBRC 16084 / F199).